A 620-amino-acid chain; its full sequence is Chaperone protein HscA homolog (620 aa).

The protein belongs to the heat shock protein 70 family.

Its function is as follows. Chaperone involved in the maturation of iron-sulfur cluster-containing proteins. Has a low intrinsic ATPase activity which is markedly stimulated by HscB. The sequence is that of Chaperone protein HscA homolog from Janthinobacterium sp. (strain Marseille) (Minibacterium massiliensis).